The following is a 427-amino-acid chain: 3-phosphoshikimate 1-carboxyvinyltransferase (427 aa).

3-phosphoshikimate contacts are provided by Lys20, Ser21, and Arg25. Lys20 is a phosphoenolpyruvate binding site. Phosphoenolpyruvate contacts are provided by Gly92 and Arg120. Positions 166, 168, 312, and 339 each coordinate 3-phosphoshikimate. Residue Gln168 coordinates phosphoenolpyruvate. The active-site Proton acceptor is the Asp312. Residues Arg343 and Arg385 each contribute to the phosphoenolpyruvate site.

Belongs to the EPSP synthase family. In terms of assembly, monomer.

It is found in the cytoplasm. The catalysed reaction is 3-phosphoshikimate + phosphoenolpyruvate = 5-O-(1-carboxyvinyl)-3-phosphoshikimate + phosphate. It participates in metabolic intermediate biosynthesis; chorismate biosynthesis; chorismate from D-erythrose 4-phosphate and phosphoenolpyruvate: step 6/7. Functionally, catalyzes the transfer of the enolpyruvyl moiety of phosphoenolpyruvate (PEP) to the 5-hydroxyl of shikimate-3-phosphate (S3P) to produce enolpyruvyl shikimate-3-phosphate and inorganic phosphate. The chain is 3-phosphoshikimate 1-carboxyvinyltransferase from Streptococcus uberis (strain ATCC BAA-854 / 0140J).